We begin with the raw amino-acid sequence, 103 residues long: Small ribosomal subunit protein uS10 (103 aa).

It belongs to the universal ribosomal protein uS10 family. In terms of assembly, part of the 30S ribosomal subunit.

Involved in the binding of tRNA to the ribosomes. This Thioalkalivibrio sulfidiphilus (strain HL-EbGR7) protein is Small ribosomal subunit protein uS10.